Here is a 303-residue protein sequence, read N- to C-terminus: Plasmodesmata-located protein 1 (303 aa).

An N-terminal signal peptide occupies residues 1-21 (MKLTYQFFIFWFFLPFFAISG). The Extracellular portion of the chain corresponds to 22-268 (DDDYKNLIFK…GEKRQHTERT (247 aa)). Gnk2-homologous domains lie at 27-136 (NLIF…SSGF) and 141-248 (GTEM…YYSH). 6 disulfide bridges follow: C33–C108, C84–C93, C96–C127, C149–C226, C202–C211, and C214–C239. The chain crosses the membrane as a helical span at residues 269-289 (IALAVGGVFVLGFVIVCLLVL). The interval 269–289 (IALAVGGVFVLGFVIVCLLVL) is necessary and sufficient for plasmodesmal targeting. Residues 290 to 303 (RSAMKKKSNKYDAY) are Cytoplasmic-facing.

It belongs to the cysteine-rich repeat secretory protein family. Plasmodesmata-located proteins (PDLD) subfamily. In terms of assembly, interacts with AZI1. Interacts with PDLP5. Does not interact with DIR1. As to quaternary structure, (Microbial infection) Interacts with Grapevine fanleaf virus (GFLV) 2B-MP. Interacts with Cauliflower mosaic virus (CaMV) movement protein. Highly expressed in cell suspension. Expressed in epidermal and spongy mesophyll cells, and the cell wall interface at the base of the leaf trichome (at protein level). Expressed in haustoria-containing cells.

It localises to the cell membrane. Its subcellular location is the cell junction. It is found in the plasmodesma. Modulates cell-to-cell trafficking. Required for systemic acquired resistance (SAR) which is mediated by the signaling molecules azelaic acid (AzA), glycerol-3-phosphate (G3P), and salicylic acid (SA). Required for the proper localization and stability of AZI1 which is involved in SAR. Mediates callose deposition during downy mildew fungal infection around haustoria. Haustoria are unicellular protrusions from hyphae and function as the site of molecular exchange of nutrients and effectors between host and pathogen. In Arabidopsis thaliana (Mouse-ear cress), this protein is Plasmodesmata-located protein 1.